We begin with the raw amino-acid sequence, 586 residues long: A-type ATP synthase subunit A (586 aa).

Residue 232-239 (GPFGSGKT) participates in ATP binding.

It belongs to the ATPase alpha/beta chains family. As to quaternary structure, has multiple subunits with at least A(3), B(3), C, D, E, F, H, I and proteolipid K(x).

The protein resides in the cell membrane. The enzyme catalyses ATP + H2O + 4 H(+)(in) = ADP + phosphate + 5 H(+)(out). In terms of biological role, component of the A-type ATP synthase that produces ATP from ADP in the presence of a proton gradient across the membrane. The A chain is the catalytic subunit. The chain is A-type ATP synthase subunit A from Methanococcus vannielii (strain ATCC 35089 / DSM 1224 / JCM 13029 / OCM 148 / SB).